Here is a 514-residue protein sequence, read N- to C-terminus: MALKCHLVLLAITLLLAQCSGSVDKKDSTTNHLDEKKTDSTEAHIVQETDALKENSYLGAEEESKEEDKKRSAAPQQPGLWGKRQKIGLWGRSADAGQPGLWGKRQSPGLWGRSADAGQPGLWGKRQNPGLWGRSADAGQPGLWGKRQNPGLWGRSADAGQPGLWGKRQNPGLWGRSADARQPGLWGKREIYALWGGKRQNPGLWGRSADPGQPGLWGKRELVGLWGGKRQNPGLWGRSAEAGQPGLWGKRQKIGLWGRSADPLQPGLWGKRQNPGLWGRSADPQQPGLWGKRQNPGLWGRSADPQQPGLWGKRQNPGLWGRSADPQQPGLWGKRQNPGLWGRSADPQQPGLWGKSPGLWGRSADPQQPGLWGKRQNPGFWGRSADPQQPGLWGKRQNPGLWGRSADPQQPGLWGKRQNPGLWGRSADPQQPGLWGKRQNPGLWGRSADPQQPGLWGKRQNPGLWGRSAGSGQLGLWGKRQSRIGLWGRSAEPPQFEDLEDLKKKSAIPQPKGQ.

A signal peptide spans 1 to 22 (MALKCHLVLLAITLLLAQCSGS). A compositionally biased stretch (basic and acidic residues) spans 23-53 (VDKKDSTTNHLDEKKTDSTEAHIVQETDALK). Residues 23-75 (VDKKDSTTNHLDEKKTDSTEAHIVQETDALKENSYLGAEEESKEEDKKRSAAP) constitute a propeptide that is removed on maturation. The disordered stretch occupies residues 23–180 (VDKKDSTTNH…PGLWGRSADA (158 aa)). A tryptophan amide mark is found at Trp-81 and Trp-90. A propeptide spanning residues 93–97 (SADAG) is cleaved from the precursor. Residues Trp-102 and Trp-111 each carry the tryptophan amide modification. Residues 114-118 (SADAG) constitute a propeptide that is removed on maturation. A tryptophan amide mark is found at Trp-123 and Trp-132. The propeptide occupies 135–139 (SADAG). Tryptophan amide is present on residues Trp-144 and Trp-153. Residues 156–160 (SADAG) constitute a propeptide that is removed on maturation. 2 positions are modified to tryptophan amide: Trp-165 and Trp-174. Positions 177-181 (SADAR) are excised as a propeptide. Trp-186 carries the tryptophan amide modification. Residues 190-199 (EIYALWGGKR) constitute a propeptide that is removed on maturation. Residue Trp-205 is modified to Tryptophan amide. A propeptide spanning residues 208–212 (SADPG) is cleaved from the precursor. Trp-217 carries the post-translational modification Tryptophan amide. The propeptide occupies 221 to 230 (ELVGLWGGKR). Tryptophan amide is present on Trp-236. Residues 239–243 (SAEAG) constitute a propeptide that is removed on maturation. Tryptophan amide is present on residues Trp-248 and Trp-257. The segment at 258 to 475 (GRSADPLQPG…GRSAGSGQLG (218 aa)) is disordered. Residues 260 to 264 (SADPL) constitute a propeptide that is removed on maturation. Tryptophan amide is present on residues Trp-269 and Trp-278. Positions 281 to 284 (SADP) are excised as a propeptide. Residues Trp-290 and Trp-299 each carry the tryptophan amide modification. A propeptide spanning residues 302–305 (SADP) is cleaved from the precursor. Trp-311 and Trp-320 each carry tryptophan amide. A propeptide spanning residues 323 to 326 (SADP) is cleaved from the precursor. Tryptophan amide occurs at positions 332 and 341. A propeptide spanning residues 344-347 (SADP) is cleaved from the precursor. Position 353 is a tryptophan amide (Trp-353). The propeptide occupies 356-366 (SPGLWGRSADP). Tryptophan amide is present on Trp-372. Positions 376 to 387 (QNPGFWGRSADP) are excised as a propeptide. 2 positions are modified to tryptophan amide: Trp-393 and Trp-402. Positions 405–408 (SADP) are excised as a propeptide. Tryptophan amide is present on residues Trp-414 and Trp-423. Positions 426–429 (SADP) are excised as a propeptide. Tryptophan amide is present on residues Trp-435 and Trp-444. The propeptide occupies 447–450 (SADP). Residues Trp-456 and Trp-465 each carry the tryptophan amide modification. A propeptide spanning residues 468–472 (SAGSG) is cleaved from the precursor. Tryptophan amide occurs at positions 477 and 487. The segment at 489–514 (RSAEPPQFEDLEDLKKKSAIPQPKGQ) is disordered. The propeptide occupies 490–514 (SAEPPQFEDLEDLKKKSAIPQPKGQ).

Belongs to the LWamide neuropeptide family.

Its subcellular location is the secreted. Its function is as follows. Metamorphosin A may be part of an internal signaling system involved in control of metamorphosis. The polypeptide is LWamide neuropeptides (Anthopleura elegantissima (Green aggregating anemone)).